The chain runs to 243 residues: uncharacterized protein (243 aa).

The first 16 residues, 1–16 (MKLLALVALCAVGVAS), serve as a signal peptide directing secretion. Asn55 carries N-linked (GlcNAc...) asparagine glycosylation. 2 disordered regions span residues 95–126 (SQGRNQQQQSNDVSSQGGNDDGSIPKAPEKPS) and 208–235 (NQQQQRQQPSSTTPASTSSTTLPPKPTV). Low complexity-rich tracts occupy residues 99-112 (NQQQQSNDVSSQGG) and 209-229 (QQQQRQQPSSTTPASTSSTTL). Cys141 and Cys239 are joined by a disulfide.

This sequence belongs to the protease inhibitor I33 family.

It localises to the secreted. This is an uncharacterized protein from Caenorhabditis elegans.